A 631-amino-acid chain; its full sequence is Probable protein phosphatase 2C 31 (631 aa).

2 disordered regions span residues 119–142 (GPLH…SDRF) and 205–231 (LSGR…PKGN). Over residues 131 to 140 (ASGSASTASD) the composition is skewed to polar residues. One can recognise a PPM-type phosphatase domain in the interval 221–622 (DGDYRSTPKG…DDVSIIVMSF (402 aa)). Residues Asp-261 and Gly-262 each coordinate Mn(2+). Residues 324 to 347 (GGDDDPDAERKAKRGRIERNADDD) form a disordered region. Asp-550 and Asp-613 together coordinate Mn(2+).

This sequence belongs to the PP2C family. Mg(2+) is required as a cofactor. Mn(2+) serves as cofactor.

The catalysed reaction is O-phospho-L-seryl-[protein] + H2O = L-seryl-[protein] + phosphate. The enzyme catalyses O-phospho-L-threonyl-[protein] + H2O = L-threonyl-[protein] + phosphate. This chain is Probable protein phosphatase 2C 31, found in Oryza sativa subsp. japonica (Rice).